A 31-amino-acid polypeptide reads, in one-letter code: Cytochrome b6-f complex subunit 6 (31 aa).

A helical membrane pass occupies residues 4 to 24; it reads ITSYFGFLLAALTITSALFIG.

It belongs to the PetL family. In terms of assembly, the 4 large subunits of the cytochrome b6-f complex are cytochrome b6, subunit IV (17 kDa polypeptide, PetD), cytochrome f and the Rieske protein, while the 4 small subunits are PetG, PetL, PetM and PetN. The complex functions as a dimer.

Its subcellular location is the plastid. The protein resides in the chloroplast thylakoid membrane. Functionally, component of the cytochrome b6-f complex, which mediates electron transfer between photosystem II (PSII) and photosystem I (PSI), cyclic electron flow around PSI, and state transitions. PetL is important for photoautotrophic growth as well as for electron transfer efficiency and stability of the cytochrome b6-f complex. The chain is Cytochrome b6-f complex subunit 6 from Coffea arabica (Arabian coffee).